We begin with the raw amino-acid sequence, 263 residues long: Transmembrane protein 176B (263 aa).

4 helical membrane passes run 61–81 (LGVT…CLYF), 89–109 (ASGC…GIVI), 125–145 (LLLA…KSLI), and 197–217 (LFLA…VVSV). The disordered stretch occupies residues 242-263 (KKLLGGDSAPASPTKEKIPVTP). Residues Ser249 and Ser253 each carry the phosphoserine modification.

Belongs to the TMEM176 family. As to expression, expressed in spleen by a variety of myeloid cells including macrophages and dendritic cells (at protein level). Ubiquitously expressed with higher expression in lymphoid tissues.

It is found in the nucleus membrane. In terms of biological role, required for the development of cerebellar granule cells. May play a role in the process of maturation of dendritic cells. This Rattus norvegicus (Rat) protein is Transmembrane protein 176B (Tmem176b).